Consider the following 639-residue polypeptide: tRNA-dihydrouridine(47) synthase [NAD(P)(+)]-like (639 aa).

Composition is skewed to polar residues over residues 1 to 19 and 54 to 65; these read MAESDGSNNENGNLDTVTQ and QTCSELSGNDAE. Disordered regions lie at residues 1–20 and 52–122; these read MAESDGSNNENGNLDTVTQK and DKQT…HSQF. Positions 66–85 are enriched in basic and acidic residues; sequence NTVRAEDAAEPEAKRIKLDD. Basic residues predominate over residues 103–119; that stretch reads EKKRARGQNKSRPHMKH. 2 C3H1-type zinc fingers span residues 122–152 and 160–190; these read FEENKLCPSVTQECASKCFFGDKCKFLHDVA and EDIRPNCYLYETFGKCIYGVTCRFAKSHLGD. Residues 300 to 302 and Gln-354 contribute to the FMN site; that span reads PLT. Cys-385 acts as the Proton donor in catalysis. Residues Lys-424, His-454, 486–488, and 509–510 contribute to the FMN site; these read NGD and AR.

Belongs to the Dus family. Dus3 subfamily. It depends on FMN as a cofactor.

It catalyses the reaction 5,6-dihydrouridine(47) in tRNA + NAD(+) = uridine(47) in tRNA + NADH + H(+). The catalysed reaction is 5,6-dihydrouridine(47) in tRNA + NADP(+) = uridine(47) in tRNA + NADPH + H(+). The enzyme catalyses a 5,6-dihydrouridine in mRNA + NAD(+) = a uridine in mRNA + NADH + H(+). It carries out the reaction a 5,6-dihydrouridine in mRNA + NADP(+) = a uridine in mRNA + NADPH + H(+). Functionally, catalyzes the synthesis of dihydrouridine, a modified base, in various RNAs, such as tRNAs, mRNAs and some long non-coding RNAs (lncRNAs). Mainly modifies the uridine in position 47 (U47) in the D-loop of most cytoplasmic tRNAs. Also able to mediate the formation of dihydrouridine in some mRNAs, thereby regulating their translation. The polypeptide is tRNA-dihydrouridine(47) synthase [NAD(P)(+)]-like (dus3l) (Xenopus tropicalis (Western clawed frog)).